The sequence spans 262 residues: Probable carboxylesterase Culp3 (262 aa).

The signal sequence occupies residues Met-1–Ala-41. A disulfide bond links Cys-44 and Cys-114. Ser-125 acts as the Nucleophile in catalysis. A disulfide bridge connects residues Cys-188 and Cys-195. The active site involves Asp-192. His-206 functions as the Proton donor/acceptor in the catalytic mechanism. Residues Leu-241–Arg-262 form a disordered region.

It belongs to the cutinase family.

It is found in the secreted. This Mycobacterium tuberculosis (strain CDC 1551 / Oshkosh) protein is Probable carboxylesterase Culp3 (cut3).